A 552-amino-acid chain; its full sequence is C-type lectin receptor-like tyrosine-protein kinase At1g52310 (552 aa).

The signal sequence occupies residues methionine 1–leucine 27. The Extracellular portion of the chain corresponds to aspartate 28–tyrosine 201. Asparagine 37, asparagine 59, asparagine 69, asparagine 106, asparagine 118, asparagine 137, asparagine 154, asparagine 169, and asparagine 180 each carry an N-linked (GlcNAc...) asparagine glycan. The 130-residue stretch at asparagine 59–alanine 188 folds into the C-type lectin domain. 2 disulfide bridges follow: cysteine 80-cysteine 187 and cysteine 164-cysteine 179. A helical transmembrane segment spans residues leucine 202–tryptophan 222. The Cytoplasmic segment spans residues leucine 223–lysine 552. Positions serine 268–valine 546 constitute a Protein kinase domain. Residues alanine 274 to threonine 282 and lysine 296 each bind ATP. The active-site Proton acceptor is the aspartate 394.

It belongs to the protein kinase superfamily. Tyr protein kinase family.

Its subcellular location is the cell membrane. It catalyses the reaction L-tyrosyl-[protein] + ATP = O-phospho-L-tyrosyl-[protein] + ADP + H(+). The sequence is that of C-type lectin receptor-like tyrosine-protein kinase At1g52310 from Arabidopsis thaliana (Mouse-ear cress).